The sequence spans 466 residues: 3-isopropylmalate dehydratase large subunit (466 aa).

The [4Fe-4S] cluster site is built by cysteine 347, cysteine 407, and cysteine 410.

The protein belongs to the aconitase/IPM isomerase family. LeuC type 1 subfamily. Heterodimer of LeuC and LeuD. [4Fe-4S] cluster is required as a cofactor.

It carries out the reaction (2R,3S)-3-isopropylmalate = (2S)-2-isopropylmalate. It participates in amino-acid biosynthesis; L-leucine biosynthesis; L-leucine from 3-methyl-2-oxobutanoate: step 2/4. In terms of biological role, catalyzes the isomerization between 2-isopropylmalate and 3-isopropylmalate, via the formation of 2-isopropylmaleate. The polypeptide is 3-isopropylmalate dehydratase large subunit (Pseudoalteromonas translucida (strain TAC 125)).